We begin with the raw amino-acid sequence, 98 residues long: Ferredoxin-like protein (98 aa).

The protein to ferredoxins from P.putida and C.tartarivorum, ferredoxin I from A.vinelandii, ferredoxin II from D.desulfuricans.

Could be a 3Fe-4S cluster-containing protein. The sequence is that of Ferredoxin-like protein (fixX) from Rhizobium leguminosarum.